Consider the following 1186-residue polypeptide: Tricalbin-1 (1186 aa).

The tract at residues 1–50 is disordered; the sequence is MAKEDTGVTAPKKPETAQVANINGIDKLEPPKTKEETESSKSVSSEKAAH. Residues 1–106 are Cytoplasmic-facing; that stretch reads MAKEDTGVTA…NIIPDSLYGD (106 aa). Residues 26-39 are compositionally biased toward basic and acidic residues; it reads DKLEPPKTKEETES. The helical transmembrane segment at 107-127 threads the bilayer; it reads WYHSVAIFFIGGVASFALGHY. Residue Lys128 is a topological domain, extracellular. Residues 129 to 149 traverse the membrane as a helical segment; that stretch reads FSMGSAFFVIVITSLLYRTSA. Residues 150-1186 are Cytoplasmic-facing; the sequence is KKYRGSIREL…HEMGEEETKF (1037 aa). An SMP-LTD domain is found at 172–375; the sequence is DYESLEWLNA…PPFSLQLNIP (204 aa). 3 C2 domains span residues 366 to 487, 512 to 636, and 640 to 757; these read PPFS…RNLK, EKKL…IKIT, and RPVR…DKYE. A coiled-coil region spans residues 795-822; sequence LEEIQDLDKVNKKKKALELRKSAIDEKK. A C2 4 domain is found at 976–1094; sequence PIDTKQLPAN…KVEGTTELDV (119 aa). Ser1000 is subject to Phosphoserine. The Ca(2+) site is built by Asp1008, Asp1014, Asp1064, Asp1066, Ser1069, and Asp1072.

This sequence belongs to the tricalbin family. In terms of assembly, interacts with TCB2 via its C-terminal domain. Ca(2+) serves as cofactor.

Its subcellular location is the cell membrane. The protein localises to the endoplasmic reticulum membrane. Functionally, may play a role in membrane trafficking. This is Tricalbin-1 (TCB1) from Saccharomyces cerevisiae (strain ATCC 204508 / S288c) (Baker's yeast).